Reading from the N-terminus, the 229-residue chain is NAD(P)H-quinone oxidoreductase subunit K, chloroplastic (229 aa).

[4Fe-4S] cluster-binding residues include C43, C44, C108, and C139.

This sequence belongs to the complex I 20 kDa subunit family. As to quaternary structure, NDH is composed of at least 16 different subunits, 5 of which are encoded in the nucleus. The cofactor is [4Fe-4S] cluster.

It localises to the plastid. The protein localises to the chloroplast thylakoid membrane. It catalyses the reaction a plastoquinone + NADH + (n+1) H(+)(in) = a plastoquinol + NAD(+) + n H(+)(out). The enzyme catalyses a plastoquinone + NADPH + (n+1) H(+)(in) = a plastoquinol + NADP(+) + n H(+)(out). Functionally, NDH shuttles electrons from NAD(P)H:plastoquinone, via FMN and iron-sulfur (Fe-S) centers, to quinones in the photosynthetic chain and possibly in a chloroplast respiratory chain. The immediate electron acceptor for the enzyme in this species is believed to be plastoquinone. Couples the redox reaction to proton translocation, and thus conserves the redox energy in a proton gradient. This is NAD(P)H-quinone oxidoreductase subunit K, chloroplastic from Piper cenocladum (Ant piper).